Reading from the N-terminus, the 662-residue chain is Histidine decarboxylase (662 aa).

Residues Y81 and H194 each coordinate substrate. K305 carries the post-translational modification N6-(pyridoxal phosphate)lysine.

The protein belongs to the group II decarboxylase family. In terms of assembly, homodimer. Pyridoxal 5'-phosphate serves as cofactor.

It catalyses the reaction L-histidine + H(+) = histamine + CO2. Its pathway is amine and polyamine biosynthesis; histamine biosynthesis; histamine from L-histidine: step 1/1. Catalyzes the biosynthesis of histamine from histidine. This is Histidine decarboxylase (HDC) from Homo sapiens (Human).